Consider the following 3123-residue polypeptide: Protein bark beetle (3123 aa).

Residues 1–34 form the signal peptide; it reads MKLQHHKTNRQRISKPHRDPKWASICLWLLVTLA. Topologically, residues 35 to 2714 are extracellular; it reads FSTHLARSQE…IIDPLSWRAD (2680 aa). Residues 83 to 104 are disordered; that stretch reads DVTVAPQGSTPSMTSSSSYTEL. Positions 91–102 are enriched in low complexity; it reads STPSMTSSSSYT. The SRCR 1 domain occupies 191-295; the sequence is IRLVDGPTPV…YHNDLGIQCL (105 aa). Disulfide bonds link C216–C284, C231–C294, and C262–C272. N-linked (GlcNAc...) asparagine glycosylation is present at N221. PbH1 repeat units lie at residues 358–380, 382–404, and 406–428; these read GLPP…NSTR, WAGF…FVNS, and QGAV…KYVG. 3 N-linked (GlcNAc...) asparagine glycosylation sites follow: N377, N389, and N403. C446 and C474 form a disulfide bridge. The CUB domain occupies 446–559; the sequence is CTLPTTSGQT…NGFFRMTSGD (114 aa). N498 and N523 each carry an N-linked (GlcNAc...) asparagine glycan. 3 PbH1 repeats span residues 562-584, 586-609, and 611-633; these read AYDL…AIDN, RSKL…HVTS, and AGDV…NITY. 8 N-linked (GlcNAc...) asparagine glycosylation sites follow: N615, N620, N630, N639, N658, N672, N702, and N709. PbH1 repeat units follow at residues 756-778 and 789-809; these read NLQG…FINN and PVKL…HVVS. N-linked (GlcNAc...) asparagine glycans are attached at residues N834, N900, and N1040. One can recognise an SRCR 2 domain in the interval 1071–1175; sequence VRLVGGAGAN…HENDVGLRCY (105 aa). 3 disulfides stabilise this stretch: C1096-C1164, C1109-C1174, and C1144-C1154. 2 PbH1 repeats span residues 1219-1241 and 1248-1270; these read HARH…GIIY and KSVN…SLKQ. N1375 carries N-linked (GlcNAc...) asparagine glycosylation. 2 PbH1 repeats span residues 1451-1475 and 1489-1511; these read VPTL…YYNR and NESI…LIRS. N1489, N1520, and N1529 each carry an N-linked (GlcNAc...) asparagine glycan. Residues 1553 to 1575 form a PbH1 13 repeat; that stretch reads LFHYVIQDTTFEQNTHGGFQVSL. N-linked (GlcNAc...) asparagine glycans are attached at residues N1584, N1593, and N1614. The stretch at 1722 to 1744 is one PbH1 14 repeat; it reads LYRNLIAENEMDYNLVAGVRSAR. 3 N-linked (GlcNAc...) asparagine glycosylation sites follow: N1883, N1920, and N1940. The 126-residue stretch at 1912–2037 folds into the SRCR 3 domain; the sequence is IRLCTSANNC…DDVFVFVSCN (126 aa). Disulfide bonds link C1950-C2025, C1963-C2036, and C2000-C2010. 2 PbH1 repeats span residues 2104 to 2126 and 2128 to 2150; these read HKNP…NMIA and SGKL…SIVS. Residues N2139, N2231, N2251, N2314, and N2357 are each glycosylated (N-linked (GlcNAc...) asparagine). PbH1 repeat units lie at residues 2337 to 2361, 2372 to 2393, and 2401 to 2424; these read TPTL…FSTC, MNSL…RIRA, and SLRG…YVEG. N-linked (GlcNAc...) asparagine glycosylation is found at N2459, N2536, N2546, N2566, N2596, and N2636. Residues 2715–2735 traverse the membrane as a helical segment; the sequence is IFAISIISAFVLAIILLILVA. The Cytoplasmic segment spans residues 2736–3123; it reads FCWFAKSKHR…SHSQPLETAM (388 aa). 4 disordered regions span residues 2766-2789, 2961-2983, 2996-3015, and 3025-3123; these read IDPQ…LSKG, YQRS…PFDQ, LYRP…ADMR, and RSSK…ETAM. The span at 2778–2788 shows a compositional bias: polar residues; the sequence is YNMSSNGTLSK. Over residues 2964 to 2973 the composition is skewed to low complexity; it reads SSHSSFMPHR. Composition is skewed to low complexity over residues 3047 to 3057 and 3068 to 3078; these read PNVAPAGGPAQ and SEESSPTTPSP. Residues 3107–3123 are compositionally biased toward polar residues; sequence PLQTNGRSHSQPLETAM.

In terms of processing, N-glycosylated. Post-translationally, may be proteolytically cleaved in the extracellular domain. As to expression, expression detected in embryonic epithelia and central nervous system (at protein level). First detected during stage 13 in the tracheal system, the foregut, the hindgut, the salivary glands and the epidermis. Expression persists in these tissues until the end of embryogenesis. Expression in epithelia declines from late stage 15 and expression appears in the central nervous system during stage 16.

Its subcellular location is the cell membrane. The protein localises to the cell junction. The protein resides in the septate junction. It is found in the adherens junction. Required for the maturation but not the establishment of septate junctions in developing epithelial cells and is involved in epithelial cell adhesion during septate junction maturation. Plays a role in the proper localization of the septate junction core components pck/mega, kune, Nrx-IV and Nrg during late embryogenesis. Involved in the formation of tricellular junctions which mediate cell contact where three epithelial cells meet but not of bicellular junctions. Required for the accumulation of Gli at tricellular junctions. In Drosophila melanogaster (Fruit fly), this protein is Protein bark beetle.